A 1092-amino-acid chain; its full sequence is Myelin regulatory factor (1092 aa).

At 1–730 (MDVEDENETL…CVSQRFLQAT (730 aa)) the chain is on the cytoplasmic side. Disordered regions lie at residues 145–168 (SYAA…PQQL), 187–210 (PPSR…SIHQ), and 258–282 (QQHG…TNTL). A compositionally biased stretch (pro residues) spans 196-205 (PPHLQGPLPP). The segment at residues 246–507 (AQQSQMLHQL…SNPGQFESDS (262 aa)) is a DNA-binding region (NDT80). A Peptidase S74 domain is found at 553-662 (SDIRAKESVE…KLTDNLETRI (110 aa)). Positions 646–677 (GAVKELCKLTDNLETRIDELERWSHKLAKLRR) form a coiled coil. The segment covering 681–695 (MKSTNSHTGSSQFSR) has biased composition (polar residues). The disordered stretch occupies residues 681–714 (MKSTNSHTGSSQFSRAGSVPYKQRPPKVMGKTVP). The helical transmembrane segment at 731 to 751 (IIALVIIMAFSVISMTTLYVL) threads the bilayer. Residues 752-1092 (NLRSEDDMLG…YYFRFYRLCD (341 aa)) are Lumenal-facing. 2 disordered regions span residues 798 to 817 (TTQL…SPDW) and 849 to 945 (ITRK…DSRY). Polar residues-rich tracts occupy residues 849-867 (ITRK…TDPA) and 928-945 (TPIT…DSRY). N-linked (GlcNAc...) asparagine glycans are attached at residues Asn-941, Asn-961, Asn-974, and Asn-996.

Belongs to the MRF family. Homotrimer. In terms of processing, follows autocatalytic cleavage via the peptidase S74 domain. Autoprocessing is apparently constitutive and is essential for transcriptional activity.

Its subcellular location is the endoplasmic reticulum membrane. The protein resides in the nucleus. The protein localises to the cytoplasm. Functionally, constitutes a precursor of the transcription factor. Mediates the autocatalytic cleavage that releases the Myelin regulatory factor, N-terminal component that specifically activates transcription of central nervous system (CNS) myelin genes. Membrane-bound part that has no transcription factor activity and remains attached to the endoplasmic reticulum membrane following cleavage. In terms of biological role, transcription factor that specifically activates expression of myelin genes during oligodendrocyte (OL) maturation, thereby playing a central role in oligodendrocyte maturation and CNS myelination. This chain is Myelin regulatory factor (myrf), found in Xenopus laevis (African clawed frog).